A 420-amino-acid polypeptide reads, in one-letter code: ATP-dependent Clp protease ATP-binding subunit ClpX (420 aa).

Residues 3 to 57 enclose the ClpX-type ZB domain; sequence KKTPGTNGKQKLFCSFCGKEQDAVKRLVAGPGVYICDECISLCNEIIAEDHEHSH. Zn(2+) contacts are provided by Cys-16, Cys-19, Cys-38, and Cys-41. 122 to 129 is an ATP binding site; that stretch reads PTGSGKTL.

The protein belongs to the ClpX chaperone family. In terms of assembly, component of the ClpX-ClpP complex. Forms a hexameric ring that, in the presence of ATP, binds to fourteen ClpP subunits assembled into a disk-like structure with a central cavity, resembling the structure of eukaryotic proteasomes.

In terms of biological role, ATP-dependent specificity component of the Clp protease. It directs the protease to specific substrates. Can perform chaperone functions in the absence of ClpP. This chain is ATP-dependent Clp protease ATP-binding subunit ClpX, found in Leptospira borgpetersenii serovar Hardjo-bovis (strain L550).